Consider the following 353-residue polypeptide: MRGTRVEIRLAALRNNALRAAELAGDAQVFAMVKANGYGHGLLLAAETMLDSVSGLGVAVLDEARTLREHGIALPILVAEGFFDAEELEAAARLSLEVVVHSLWQVELLLANPCPVRIWLKVNAGMNRLGLRPNEALSAAARLSQAGNAPVGVMSHFACADMDEDIHSEKQLLLAGSVAEQLQLPLSASNSAALLRYPRAHAQRVRPGIMLYGSSPFNWQTAAELGLQVSHRFSARLIAINAVEAGESVGYGATWTASDPRQIGVVAVGYGDGYPRHAPSGTPVAVNGVVTTLVGRVSMDMITIDVTGLSASVGDEVELWGDVVDVDDVARACGTISYELFCQITQRPERTIV.

Lys-34 functions as the Proton acceptor; specific for D-alanine in the catalytic mechanism. Lys-34 is subject to N6-(pyridoxal phosphate)lysine. A substrate-binding site is contributed by Arg-128. Tyr-251 serves as the catalytic Proton acceptor; specific for L-alanine. Met-299 provides a ligand contact to substrate.

This sequence belongs to the alanine racemase family. It depends on pyridoxal 5'-phosphate as a cofactor.

The catalysed reaction is L-alanine = D-alanine. The protein operates within amino-acid biosynthesis; D-alanine biosynthesis; D-alanine from L-alanine: step 1/1. In terms of biological role, catalyzes the interconversion of L-alanine and D-alanine. May also act on other amino acids. This chain is Alanine racemase (alr), found in Alcanivorax borkumensis (strain ATCC 700651 / DSM 11573 / NCIMB 13689 / SK2).